Here is a 306-residue protein sequence, read N- to C-terminus: Type 2A encapsulin shell protein SrpI (306 aa).

It belongs to the encapsulin family. Family 2A subfamily. As to quaternary structure, the 24.5 nm encapsulin nanocompartment is formed by 60 subunits; monomers form pentamers which assemble to form shells. There are 12 positively charged pores where the pentamers meet with a minimal pore diameter of 3.7 Angstroms as well 3-fold axis channels and dimer channels.

It is found in the encapsulin nanocompartment. Functionally, shell component of a type 2A encapsulin nanocompartment. Expression in E.coli generates nanocompartments with an average diameter of 25 nm. They can be disassembled by treatment with 6M guanidine hydrochloride and reassembled with cargo. The nanocompartment is probably involved in sulfur metabolism. Probably allows passage of cysteine into its interior; during growth in light the physiological pH is 8-8.4, about 30-54% of free cysteine (charge -1) would be able to pass through the shell. The sequence is that of Type 2A encapsulin shell protein SrpI from Synechococcus elongatus (strain ATCC 33912 / PCC 7942 / FACHB-805) (Anacystis nidulans R2).